A 328-amino-acid chain; its full sequence is Coiled-coil domain-containing protein 54 (328 aa).

Residues 122–151 (TTKDILSMKEDIKALKKKVTELEKQNSYSR) adopt a coiled-coil conformation. Thr182 bears the Phosphothreonine mark. Residues 186–197 (TDREMSSAEPEK) show a composition bias toward basic and acidic residues. The disordered stretch occupies residues 186 to 205 (TDREMSSAEPEKVPSYPKST).

This is Coiled-coil domain-containing protein 54 (CCDC54) from Macaca fascicularis (Crab-eating macaque).